Here is a 175-residue protein sequence, read N- to C-terminus: MYLPKEKEIIQIKSYKHNGKLHRTWKKTVVLKSTENIIIGGNDHTLVVEADGRKWVTREPSICYFHSDYWFNVISMIREDGIYHYCNLGTPFAVDEQALKYIDYDLDIKVFPDGRFHLLDEGEYEQHRRQMKYPDSIDRILRHNVDVLSHWILDKKGPFSPDYIDIWYEKYKEYR.

Catalysis depends on R23, which acts as the Proton donor. Residues N87, D103, D105, D107, D120, and E123 each coordinate Mg(2+).

Belongs to the Ntdp family. Mg(2+) is required as a cofactor.

It carries out the reaction a ribonucleoside 5'-triphosphate + H2O = a ribonucleoside 5'-diphosphate + phosphate + H(+). The enzyme catalyses a ribonucleoside 5'-diphosphate + H2O = a ribonucleoside 5'-phosphate + phosphate + H(+). Its function is as follows. Has nucleoside phosphatase activity towards nucleoside triphosphates and nucleoside diphosphates. The sequence is that of Nucleoside triphosphate/diphosphate phosphatase from Listeria monocytogenes serotype 4b (strain CLIP80459).